A 328-amino-acid polypeptide reads, in one-letter code: Biotin synthase (328 aa).

The 228-residue stretch at 48 to 275 (NRIQLSKLLN…KSHVRLTAGR (228 aa)) folds into the Radical SAM core domain. [4Fe-4S] cluster-binding residues include Cys-63, Cys-67, and Cys-70. [2Fe-2S] cluster-binding residues include Cys-107, Cys-138, Cys-198, and Arg-270.

Belongs to the radical SAM superfamily. Biotin synthase family. Homodimer. It depends on [4Fe-4S] cluster as a cofactor. Requires [2Fe-2S] cluster as cofactor.

It carries out the reaction (4R,5S)-dethiobiotin + (sulfur carrier)-SH + 2 reduced [2Fe-2S]-[ferredoxin] + 2 S-adenosyl-L-methionine = (sulfur carrier)-H + biotin + 2 5'-deoxyadenosine + 2 L-methionine + 2 oxidized [2Fe-2S]-[ferredoxin]. It participates in cofactor biosynthesis; biotin biosynthesis; biotin from 7,8-diaminononanoate: step 2/2. Its function is as follows. Catalyzes the conversion of dethiobiotin (DTB) to biotin by the insertion of a sulfur atom into dethiobiotin via a radical-based mechanism. The sequence is that of Biotin synthase from Brucella abortus (strain S19).